An 82-amino-acid chain; its full sequence is Cytochrome b559 subunit alpha (82 aa).

A helical membrane pass occupies residues 22–36 (IIHAVALPAIFVAGF). Heme is bound at residue histidine 24.

Belongs to the PsbE/PsbF family. In terms of assembly, heterodimer of an alpha subunit and a beta subunit. PSII is composed of 1 copy each of membrane proteins PsbA, PsbB, PsbC, PsbD, PsbE, PsbF, PsbH, PsbI, PsbJ, PsbK, PsbL, PsbM, PsbT, PsbX, PsbY, Psb30/Ycf12, peripheral proteins PsbO, CyanoQ (PsbQ), PsbU, PsbV and a large number of cofactors. It forms dimeric complexes. The cofactor is heme b.

It localises to the cellular thylakoid membrane. Its function is as follows. This b-type cytochrome is tightly associated with the reaction center of photosystem II (PSII). PSII is a light-driven water:plastoquinone oxidoreductase that uses light energy to abstract electrons from H(2)O, generating O(2) and a proton gradient subsequently used for ATP formation. It consists of a core antenna complex that captures photons, and an electron transfer chain that converts photonic excitation into a charge separation. The chain is Cytochrome b559 subunit alpha from Prochlorococcus marinus (strain NATL1A).